The chain runs to 324 residues: Quinolinate synthase (324 aa).

Iminosuccinate is bound by residues histidine 39 and serine 56. Cysteine 101 is a binding site for [4Fe-4S] cluster. Residues 127–129 (YIN) and serine 144 each bind iminosuccinate. Residue cysteine 187 coordinates [4Fe-4S] cluster. Iminosuccinate is bound by residues 213 to 215 (HPE) and threonine 230. [4Fe-4S] cluster is bound at residue cysteine 280.

It belongs to the quinolinate synthase family. Type 2 subfamily. It depends on [4Fe-4S] cluster as a cofactor.

The protein localises to the cytoplasm. The catalysed reaction is iminosuccinate + dihydroxyacetone phosphate = quinolinate + phosphate + 2 H2O + H(+). It functions in the pathway cofactor biosynthesis; NAD(+) biosynthesis; quinolinate from iminoaspartate: step 1/1. Functionally, catalyzes the condensation of iminoaspartate with dihydroxyacetone phosphate to form quinolinate. In Trichormus variabilis (strain ATCC 29413 / PCC 7937) (Anabaena variabilis), this protein is Quinolinate synthase.